A 119-amino-acid polypeptide reads, in one-letter code: Large ribosomal subunit protein bL17 (119 aa).

It belongs to the bacterial ribosomal protein bL17 family. As to quaternary structure, part of the 50S ribosomal subunit. Contacts protein L32.

The sequence is that of Large ribosomal subunit protein bL17 from Malacoplasma penetrans (strain HF-2) (Mycoplasma penetrans).